Here is a 249-residue protein sequence, read N- to C-terminus: Large ribosomal subunit protein uL4 (249 aa).

This sequence belongs to the universal ribosomal protein uL4 family. As to quaternary structure, part of the 50S ribosomal subunit.

Functionally, one of the primary rRNA binding proteins, this protein initially binds near the 5'-end of the 23S rRNA. It is important during the early stages of 50S assembly. It makes multiple contacts with different domains of the 23S rRNA in the assembled 50S subunit and ribosome. Forms part of the polypeptide exit tunnel. In Methanoculleus marisnigri (strain ATCC 35101 / DSM 1498 / JR1), this protein is Large ribosomal subunit protein uL4.